The following is a 79-amino-acid chain: Defensin-like protein 3 (79 aa).

A signal peptide spans 1 to 29; sequence MAKFASIITLLFAALVVFAAFEAPTMVEA. 4 disulfide bridges follow: Cys-32–Cys-79, Cys-43–Cys-64, Cys-49–Cys-73, and Cys-53–Cys-75.

It belongs to the DEFL family.

The protein resides in the secreted. Its function is as follows. Possesses antifungal activity sensitive to inorganic cations. In Brassica napus (Rape), this protein is Defensin-like protein 3 (AFP3).